Reading from the N-terminus, the 784-residue chain is MSMTLFASVTRPGLPGPTALRFPETRHLFHSVTAFAASFSPSKSSVGSSQCNATTPPAEYKEYTGNDLAKTTVDGIEKDIHSNKGLSDKTRELVMSIRSILRTMEEGEISMSPYDTAWVAMVEDIDGGGGPHFPSTLDWISSNQLADGSWGDPIFLVYDRLINTFACVIALTSWKMHPDKCDKAISFIRENMYKLDDEKEERMPIGFEMTFPPLVEKAKRLNINFPDDSPGLRKIYAQRDLKFKRIPWDKMHTVPTTLLYSLEGMALEADVLDWQKLLKLQSPDGSLFYSPASTAFALQQTGDHNCLQYLLKLVQTFNGGVPNLYPLDLYERSWAVDRLQRLGISRFFEPQIEECMKYVHRYWSNKNGVYAARHSDIQDIDDTSMGFRVLRLNGFDVSPDAFKQFEDDDGEFLCFIGQTNHSVSATYNLYRASQVMFPGEEILQRAKKFSTKFLQDKRAENELLDKWVITKDLPGEVGYALDVPWYASLPRVEARFYIEQYGGEDVAWIGKVLFRAPNVNNDNYLELAKLDYNDCQALHQHEWKNIQQWYKSCGLRGFGLGEESLLLAYYIAAASVFEPEKSGERLAWAKTAALVKTITSQKLTKDQKHDFIREFEQGSILENANGGRCGTSNKLVETIFTTVHKMSLETSSRDIHHQLLHAWRKWVVAWEVGGDGDAELFVQTLNLTGGSSEPTPFCHPKYQQLLEVTTRICHQLRKSTVKEIQVESDMQELVKLVVTKSSGDLDSDIKQKFLTIARSFYYAAHCSTEAIGFHIVKVLFERLV.

A chloroplast-targeting transit peptide spans 1–57 (MSMTLFASVTRPGLPGPTALRFPETRHLFHSVTAFAASFSPSKSSVGSSQCNATTPP). K242 provides a ligand contact to substrate. Mg(2+)-binding residues include D379 and D381. The short motif at 379–382 (DIDD) is the DXDD motif element. K466 serves as a coordination point for substrate.

The protein belongs to the terpene synthase family. It depends on Mg(2+) as a cofactor. In terms of tissue distribution, present in both leaves and flowers.

The protein localises to the plastid. It localises to the chloroplast. The protein operates within plant hormone biosynthesis; gibberellin biosynthesis. It participates in secondary metabolite biosynthesis; terpenoid biosynthesis. Functionally, involved in the biosynthesis of labdane-type diterpenoid including marrubiin and other labdane-related furanoid diterpenoids with potential applications as anti-diabetics, analgesics or vasorelaxants. May be involved in the conversion of geranylgeranyl diphosphate (GGPP) to ent-copalyl diphosphate (ent-CPP) and 8-hydroxycopalyl diphosphate (LPP, labda-13-en-8-ol diphosphate). This is ent-copalyl diphosphate synthase 2, chloroplastic from Marrubium vulgare (White horehound).